The primary structure comprises 488 residues: Ribulose bisphosphate carboxylase large chain (488 aa).

Positions 127 and 177 each coordinate substrate. Residue Lys-179 is the Proton acceptor of the active site. Lys-181 provides a ligand contact to substrate. Residues Lys-205, Asp-207, and Glu-208 each coordinate Mg(2+). Residue Lys-205 is modified to N6-carboxylysine. Residue His-297 is the Proton acceptor of the active site. Substrate contacts are provided by Arg-298, His-330, and Ser-382.

The protein belongs to the RuBisCO large chain family. Type I subfamily. Heterohexadecamer of 8 large chains and 8 small chains. It depends on Mg(2+) as a cofactor.

Its subcellular location is the plastid. The protein resides in the chloroplast. It catalyses the reaction 2 (2R)-3-phosphoglycerate + 2 H(+) = D-ribulose 1,5-bisphosphate + CO2 + H2O. The catalysed reaction is D-ribulose 1,5-bisphosphate + O2 = 2-phosphoglycolate + (2R)-3-phosphoglycerate + 2 H(+). RuBisCO catalyzes two reactions: the carboxylation of D-ribulose 1,5-bisphosphate, the primary event in carbon dioxide fixation, as well as the oxidative fragmentation of the pentose substrate in the photorespiration process. Both reactions occur simultaneously and in competition at the same active site. The polypeptide is Ribulose bisphosphate carboxylase large chain (Pyropia suborbiculata (Red alga)).